Here is a 144-residue protein sequence, read N- to C-terminus: Protein MIX23 (144 aa).

A2 is modified (N-acetylalanine). Residues 82 to 120 (VKSLREEREKNLDDLTLLKRLRKEQTKLKWMQSELNVEE) are a coiled coil. K100 carries the post-translational modification N6-acetyllysine.

This sequence belongs to the MIX23 family.

This is Protein MIX23 from Mus musculus (Mouse).